The primary structure comprises 212 residues: ATP-dependent dethiobiotin synthetase BioD (212 aa).

12-17 (DCGKTF) is a binding site for ATP. Threonine 16 is a binding site for Mg(2+). Residue lysine 33 is part of the active site. Substrate is bound at residue serine 37. ATP contacts are provided by residues aspartate 50, 110-113 (EGAG), and 170-171 (NC). Residues aspartate 50 and glutamate 110 each coordinate Mg(2+).

Belongs to the dethiobiotin synthetase family. As to quaternary structure, homodimer. Requires Mg(2+) as cofactor.

The protein resides in the cytoplasm. The enzyme catalyses (7R,8S)-7,8-diammoniononanoate + CO2 + ATP = (4R,5S)-dethiobiotin + ADP + phosphate + 3 H(+). Its pathway is cofactor biosynthesis; biotin biosynthesis; biotin from 7,8-diaminononanoate: step 1/2. Catalyzes a mechanistically unusual reaction, the ATP-dependent insertion of CO2 between the N7 and N8 nitrogen atoms of 7,8-diaminopelargonic acid (DAPA, also called 7,8-diammoniononanoate) to form a ureido ring. The protein is ATP-dependent dethiobiotin synthetase BioD of Legionella pneumophila (strain Corby).